We begin with the raw amino-acid sequence, 637 residues long: E3 ubiquitin-protein ligase CHFR (637 aa).

An FHA domain is found at 31–82 (CTVGRKKDCDLSFPANKLVSGNHCKITHDQNSGKVWLEDMSTNGTVINMSKV). Disordered regions lie at residues 120–172 (ESAS…SSSL) and 193–267 (SSSA…EGAT). A compositionally biased stretch (acidic residues) spans 130 to 142 (GREEDSDLTETES). The span at 193–210 (SSSAVCKGDSTSSGSPAQ) shows a compositional bias: polar residues. The span at 258–267 (SGKEKTEGAT) shows a compositional bias: basic and acidic residues. The segment at 277-316 (CIICQDLLYDCISVQPCMHTFCAACYSGWMERSSFCPTCR) adopts an RING-type zinc-finger fold. A disordered region spans residues 428 to 447 (KTAGDGPSTSSDSTTAAPQE). Residues 429-445 (TAGDGPSTSSDSTTAAP) are compositionally biased toward low complexity. Residues 606–628 (PNCYWGRNCRTQVKAHHALKFNH) form a PBZ-type zinc finger.

It belongs to the CHFR family.

It is found in the nucleus. It localises to the PML body. The catalysed reaction is S-ubiquitinyl-[E2 ubiquitin-conjugating enzyme]-L-cysteine + [acceptor protein]-L-lysine = [E2 ubiquitin-conjugating enzyme]-L-cysteine + N(6)-ubiquitinyl-[acceptor protein]-L-lysine.. The protein operates within protein modification; protein ubiquitination. Its function is as follows. E3 ubiquitin-protein ligase that functions in the antephase checkpoint by actively delaying passage into mitosis in response to microtubule poisons. Acts in early prophase before chromosome condensation, when the centrosome move apart from each other along the periphery of the nucleus. Probably involved in signaling the presence of mitotic stress caused by microtubule poisons by mediating the 'Lys-48'-linked ubiquitination of target proteins, leading to their degradation by the proteasome. May also promote the formation of 'Lys-63'-linked polyubiquitin chains and functions with the specific ubiquitin-conjugating ubc13-mms2 (ube2n-ube2v2) heterodimer. Substrates that are polyubiquitinated at 'Lys-63' are usually not targeted for degradation, but are rather involved in signaling cellular stress. The chain is E3 ubiquitin-protein ligase CHFR (chfr) from Danio rerio (Zebrafish).